Reading from the N-terminus, the 441-residue chain is POC1 centriolar protein homolog A (441 aa).

7 WD repeats span residues 16-55, 58-97, 100-139, 142-181, 184-223, 226-265, and 268-307; these read GHRDTVTTVDFNPNTKQLASGSMDSCLMIWNMKPQMRAYR, GHKDAILSVDFSPSGHLIASASRDKTVRLWVPSVKGESTV, AHTGTVRSVSFSGDGQSLVTASDDKTIKVWTVHRQKFLFS, QHINWVRCAKFSPDGRLIVSASDDKTIKLWDKTSRECIHS, EHGGFVNFVDFHPSGTCIAAAATDNTVKVWDIRMNKLIQH, VHSGVVNSLSFHPSGNYLITASNDSTLKVLDLLEGRLLYT, and GHQGPVTSVKFSREGEFFASGGSDEQVMVWKTNFDSASYA. The segment at 323-380 is disordered; the sequence is DYTSGVPAADRHRPERNAQTDQADDLEPRHIQMSAKDRSSPLSYTSRSIDQHHPQAED. Basic and acidic residues-rich tracts occupy residues 331-340, 348-361, and 371-380; these read ADRHRPERNA, LEPRHIQMSAKDRS, and IDQHHPQAED. The stretch at 400–427 forms a coiled coil; sequence LTRTVGILEQRLSLTEDKLKECIDNQQA.

This sequence belongs to the WD repeat POC1 family. In terms of assembly, interacts with pat.

The protein localises to the cytoplasm. It localises to the cytoskeleton. Its function is as follows. May play an important role in centriole assembly and/or stability and ciliogenesis. In Xenopus tropicalis (Western clawed frog), this protein is POC1 centriolar protein homolog A (poc1a).